Consider the following 131-residue polypeptide: Translation initiation factor 5A (131 aa).

At K36 the chain carries Hypusine.

This sequence belongs to the eIF-5A family.

Its subcellular location is the cytoplasm. Its function is as follows. Functions by promoting the formation of the first peptide bond. This Metallosphaera sedula (strain ATCC 51363 / DSM 5348 / JCM 9185 / NBRC 15509 / TH2) protein is Translation initiation factor 5A (eIF5A).